The chain runs to 89 residues: uncharacterized protein (89 aa).

This is an uncharacterized protein from Escherichia coli (strain K12).